A 441-amino-acid chain; its full sequence is Malate dehydrogenase [NADP], chloroplastic (441 aa).

The N-terminal 51 residues, 1-51, are a transit peptide targeting the chloroplast; the sequence is MAVAELSPSYKTQLKTCQQLSSSLSTRLSDHRKFSLRLLPRPVSVRGGIRC. An intrachain disulfide couples Cys75 to Cys80. Residue 104–110 coordinates NADP(+); it reads GAAGMIS. Residues Arg185 and Arg191 each contribute to the substrate site. Residue Asn198 participates in NADP(+) binding. Position 205 (Gln205) interacts with NAD(+). Residue 222–224 coordinates NADP(+); the sequence is VGN. Residues Asn224 and Arg255 each contribute to the substrate site. His280 functions as the Proton acceptor in the catalytic mechanism. Cys416 and Cys428 are oxidised to a cystine.

Belongs to the LDH/MDH superfamily. MDH type 2 family. In terms of assembly, homodimer.

The protein resides in the plastid. It is found in the chloroplast. It carries out the reaction (S)-malate + NADP(+) = oxaloacetate + NADPH + H(+). Its activity is regulated as follows. Chloroplast NADP-MDH is activated upon illumination. In order to be enzymatically active, disulfide bridges on the protein must be reduced by thioredoxin which receives electrons from ferredoxin and the electron transport system of photosynthesis. The chloroplastic, NADP-dependent form is essential for the photosynthesis C4 cycle, which allows plants to circumvent the problem of photorespiration. In C4 plants, NADP-MDH activity acts to convert oxaloacetate to malate in chloroplasts of mesophyll cells for transport to the bundle sheath cells. The protein is Malate dehydrogenase [NADP], chloroplastic (MDH1) of Mesembryanthemum crystallinum (Common ice plant).